A 490-amino-acid chain; its full sequence is Bifunctional protein HldE (490 aa).

The segment at 1-330 is ribokinase; sequence MNNFDTLLQS…RKILPHASLA (330 aa). ATP is bound at residue 205 to 208; that stretch reads NRKE. Residue D275 is part of the active site. Positions 358–490 are cytidylyltransferase; the sequence is FTNGCFDILH…LVEKAREGTS (133 aa).

The protein in the N-terminal section; belongs to the carbohydrate kinase PfkB family. This sequence in the C-terminal section; belongs to the cytidylyltransferase family. In terms of assembly, homodimer.

The catalysed reaction is D-glycero-beta-D-manno-heptose 7-phosphate + ATP = D-glycero-beta-D-manno-heptose 1,7-bisphosphate + ADP + H(+). It catalyses the reaction D-glycero-beta-D-manno-heptose 1-phosphate + ATP + H(+) = ADP-D-glycero-beta-D-manno-heptose + diphosphate. Its pathway is nucleotide-sugar biosynthesis; ADP-L-glycero-beta-D-manno-heptose biosynthesis; ADP-L-glycero-beta-D-manno-heptose from D-glycero-beta-D-manno-heptose 7-phosphate: step 1/4. It functions in the pathway nucleotide-sugar biosynthesis; ADP-L-glycero-beta-D-manno-heptose biosynthesis; ADP-L-glycero-beta-D-manno-heptose from D-glycero-beta-D-manno-heptose 7-phosphate: step 3/4. Catalyzes the phosphorylation of D-glycero-D-manno-heptose 7-phosphate at the C-1 position to selectively form D-glycero-beta-D-manno-heptose-1,7-bisphosphate. In terms of biological role, catalyzes the ADP transfer from ATP to D-glycero-beta-D-manno-heptose 1-phosphate, yielding ADP-D-glycero-beta-D-manno-heptose. This chain is Bifunctional protein HldE, found in Rhodopseudomonas palustris (strain HaA2).